The primary structure comprises 190 residues: Xanthine phosphoribosyltransferase 2 (190 aa).

Positions 20 and 27 each coordinate xanthine. 129-133 (ANGCA) provides a ligand contact to 5-phospho-alpha-D-ribose 1-diphosphate. K157 contributes to the xanthine binding site.

Belongs to the purine/pyrimidine phosphoribosyltransferase family. Xpt subfamily. As to quaternary structure, homodimer.

It localises to the cytoplasm. The enzyme catalyses XMP + diphosphate = xanthine + 5-phospho-alpha-D-ribose 1-diphosphate. The protein operates within purine metabolism; XMP biosynthesis via salvage pathway; XMP from xanthine: step 1/1. Its function is as follows. Converts the preformed base xanthine, a product of nucleic acid breakdown, to xanthosine 5'-monophosphate (XMP), so it can be reused for RNA or DNA synthesis. This is Xanthine phosphoribosyltransferase 2 from Clostridium botulinum (strain ATCC 19397 / Type A).